Reading from the N-terminus, the 197-residue chain is Xanthine phosphoribosyltransferase (197 aa).

Xanthine-binding residues include leucine 20 and threonine 27. Residue alanine 128–alanine 132 participates in 5-phospho-alpha-D-ribose 1-diphosphate binding. Lysine 156 provides a ligand contact to xanthine.

It belongs to the purine/pyrimidine phosphoribosyltransferase family. Xpt subfamily. As to quaternary structure, homodimer.

The protein resides in the cytoplasm. It carries out the reaction XMP + diphosphate = xanthine + 5-phospho-alpha-D-ribose 1-diphosphate. Its pathway is purine metabolism; XMP biosynthesis via salvage pathway; XMP from xanthine: step 1/1. Functionally, converts the preformed base xanthine, a product of nucleic acid breakdown, to xanthosine 5'-monophosphate (XMP), so it can be reused for RNA or DNA synthesis. The protein is Xanthine phosphoribosyltransferase of Lactococcus lactis subsp. cremoris (strain MG1363).